Here is a 507-residue protein sequence, read N- to C-terminus: RNA-binding protein Nova-1 (507 aa).

Residues 1–44 (MMAAAPIQQNGTHTGVPIDLDPPDSRKRPLEAPPEAGSTKRTNT) form a disordered region. The short motif at 27–43 (KRPLEAPPEAGSTKRTN) is the Bipartite nuclear localization signal element. The KH 1 domain maps to 49–116 (QYFLKVLIPS…EALNAVHGFI (68 aa)). Positions 139-171 (QTTVNPDRIKQTLPSSPTTTKSSPSDPMTTSRA) are disordered. Residues 150-169 (TLPSSPTTTKSSPSDPMTTS) are compositionally biased toward low complexity. A Phosphoserine modification is found at serine 154. 2 consecutive KH domains span residues 171 to 237 (ANQV…VELI) and 421 to 488 (KDVV…QYLI). The segment at 419–503 (GSKDVVEIAV…YEQGVRAANP (85 aa)) is required for RNA binding.

As to quaternary structure, interacts with PTBP2; the interaction is direct. As to expression, expressed in cerebellum, brain stem, hippocampus, and frontal cortex.

It localises to the nucleus. Its function is as follows. Functions to regulate alternative splicing in neurons by binding pre-mRNA in a sequence-specific manner to activate exon inclusion or exclusion. It binds specifically to the sequences 5'-YCAY-3' and regulates splicing in only a subset of regulated exons. Binding to an exonic 5'-YCAY-3' cluster changes the protein complexes assembled on pre-mRNA, blocking U1 snRNP binding and exon inclusion, whereas binding to an intronic 5'-YCAY-3' cluster enhances spliceosome assembly and exon inclusion. Binding to 5'-YCAY-3' clusters results in a local and asymmetric action to regulate spliceosome assembly and alternative splicing in neurons. Binding to an exonic 5'-YCAY-3' cluster changed the protein complexes assembled on pre-mRNA, blocking U1 snRNP (small nuclear ribonucleoprotein) binding and exon inclusion, whereas binding to an intronic 5'-YCAY-3' cluster enhanced spliceosome assembly and exon inclusion. With NOVA1, they perform unique biological functions in different brain areas and cell types. Autoregulates its own expression by acting as a splicing repressor. Acts to activate the inclusion of exon E3A in the glycine receptor alpha-2 chain and of exon E9 in gamma-aminobutyric-acid receptor gamma-2 subunit via a distal downstream UCAU-rich intronic splicing enhancer. Acts to regulate a novel glycine receptor alpha-2 chain splice variant (alpha-2N) in developing spinal cord. This is RNA-binding protein Nova-1 from Homo sapiens (Human).